We begin with the raw amino-acid sequence, 73 residues long: uncharacterized protein (73 aa).

Transmembrane regions (helical) follow at residues 7 to 27 (LFSSLTFSLTVLFLLLLIPNL) and 47 to 67 (YFGYPSLGILFAGILSPIIIL).

Its subcellular location is the cell membrane. This is an uncharacterized protein from Methanocaldococcus jannaschii (strain ATCC 43067 / DSM 2661 / JAL-1 / JCM 10045 / NBRC 100440) (Methanococcus jannaschii).